The chain runs to 396 residues: MDPDAFLFKWDHRTALPQPNRLLDAVAPPPPPPPQAPSYSMRPRELGGLEELFQAYGIRYYTAAKIAELGFTVNTLLDMRDEELDEMMNSLCQIFRWDLLVGERYGIKAAVRAERRRIDEEEVRRRHLLLGDTTHALDALSQEGLSEEPVQQEKEAMGSGGGGVGGVWEMMGAGGRKAPQRRRKNYKGRSRMASMEEDDDDDDDETEGAEDDENIVSERQREHPFIVTEPGEVARGKKNGLDYLFHLYEQCRDFLIQVQTIAKERGEKCPTKVTNQVFRYAKKAGANYINKPKMRHYVHCYALHCLDEAASNALRRAFKERGENVGAWRQACYKPLVAIAARQGWDIDTIFNAHPRLSIWYVPTKLRQLCHAERSSAAVAATSSITGGGPADHLPF.

The interval 144-223 (GLSEEPVQQE…NIVSERQREH (80 aa)) is disordered. Over residues 178 to 190 (APQRRRKNYKGRS) the composition is skewed to basic residues. The segment covering 195–215 (MEEDDDDDDDETEGAEDDENI) has biased composition (acidic residues). DNA-binding regions lie at residues 221–225 (REHPF), 290–297 (NKPKMRHY), and 361–364 (YVPT).

The protein belongs to the FLO/LFY family. As to expression, bract, sepal, petal, and carpel primordia, but not in stamen primordia.

Its subcellular location is the nucleus. Required for flower development. FLO may interact in a sequential manner with other homeotic genes affecting floral organ identity. The sequence is that of Floricaula protein (FLO) from Antirrhinum majus (Garden snapdragon).